Here is a 287-residue protein sequence, read N- to C-terminus: Glucose import system permease protein GlcU (287 aa).

7 helical membrane-spanning segments follow: residues 14–34 (HYLA…AMLI), 76–96 (IIVI…AYFF), 113–133 (VLFS…LLPL), 149–169 (IIFA…SMFI), 194–214 (IVFP…IIQA), 218–238 (FFIP…IAVL), and 250–270 (DTFA…VFLG). In terms of domain architecture, ABC transmembrane type-1 spans 71 to 269 (LINSLIIVIP…IIPLAIFVFL (199 aa)).

This sequence belongs to the binding-protein-dependent transport system permease family. The complex is composed of two ATP-binding proteins (GlcV), two transmembrane proteins (GlcT and GlcU) and a solute-binding protein (GlcS).

It localises to the cell membrane. Part of the ABC transporter complex GlcSTUV involved in glucose uptake. Responsible for the translocation of the substrate across the membrane. In Saccharolobus solfataricus (strain ATCC 35092 / DSM 1617 / JCM 11322 / P2) (Sulfolobus solfataricus), this protein is Glucose import system permease protein GlcU.